The sequence spans 107 residues: UPF0145 protein Memar_1285 (107 aa).

It belongs to the UPF0145 family.

The polypeptide is UPF0145 protein Memar_1285 (Methanoculleus marisnigri (strain ATCC 35101 / DSM 1498 / JR1)).